The following is a 42-amino-acid chain: uncharacterized protein (42 aa).

The segment at 1-42 is disordered; that stretch reads MTTGKPQSFEKMRTPFPGRSKAKGPQSDIIPSAPPNTPVTEH. The segment covering 32 to 42 has biased composition (pro residues); that stretch reads SAPPNTPVTEH.

This is an uncharacterized protein from Schizosaccharomyces pombe (strain 972 / ATCC 24843) (Fission yeast).